Reading from the N-terminus, the 794-residue chain is cAMP and cAMP-inhibited cGMP 3',5'-cyclic phosphodiesterase 10A (794 aa).

3',5'-cyclic AMP-binding positions include 296–297, 340–341, T374, Q393, and H525; these read RC and IA. The region spanning 452 to 769 is the PDEase domain; sequence TSEEWQGLMH…NQWEKVIRGE (318 aa). H525 (proton donor) is an active-site residue. H525 is a binding site for 3',5'-cyclic GMP. A divalent metal cation is bound by residues H529, H563, D564, and D674. Position 726 (Q726) interacts with 3',5'-cyclic AMP. Q726 lines the 3',5'-cyclic GMP pocket.

It belongs to the cyclic nucleotide phosphodiesterase family. As to quaternary structure, homodimer. A divalent metal cation is required as a cofactor. Detected in striatum and testis (at protein level). Detected in whole brain, hippocampus, olfactory bulb, striatum neurons and testis.

Its subcellular location is the cytoplasm. The protein resides in the cytosol. It catalyses the reaction a nucleoside 3',5'-cyclic phosphate + H2O = a nucleoside 5'-phosphate + H(+). The enzyme catalyses 3',5'-cyclic AMP + H2O = AMP + H(+). It carries out the reaction 3',5'-cyclic GMP + H2O = GMP + H(+). Its pathway is purine metabolism; 3',5'-cyclic AMP degradation; AMP from 3',5'-cyclic AMP: step 1/1. The protein operates within purine metabolism; 3',5'-cyclic GMP degradation; GMP from 3',5'-cyclic GMP: step 1/1. Inhibited by dipyridamole and moderately by IBMX, zaprinast and rolipram. Its function is as follows. Plays a role in signal transduction by regulating the intracellular concentration of cyclic nucleotides. Can hydrolyze both cAMP and cGMP, but has higher affinity for cAMP and is more efficient with cAMP as substrate. In Rattus norvegicus (Rat), this protein is cAMP and cAMP-inhibited cGMP 3',5'-cyclic phosphodiesterase 10A (Pde10a).